A 727-amino-acid chain; its full sequence is Procollagen-lysine,2-oxoglutarate 5-dioxygenase 1 (727 aa).

Residues M1 to A18 form the signal peptide. N-linked (GlcNAc...) asparagine glycans are attached at residues N163, N197, and N538. In terms of domain architecture, Fe2OG dioxygenase spans Q636–P727. Residues H656 and D658 each contribute to the Fe cation site. N-linked (GlcNAc...) asparagine glycosylation occurs at N686. Fe cation is bound at residue H708. R718 is a catalytic residue.

As to quaternary structure, homodimer. Identified in a complex with P3H3 and P3H4. The cofactor is Fe(2+). Requires L-ascorbate as cofactor.

The protein resides in the rough endoplasmic reticulum membrane. It catalyses the reaction L-lysyl-[collagen] + 2-oxoglutarate + O2 = (5R)-5-hydroxy-L-lysyl-[collagen] + succinate + CO2. Part of a complex composed of PLOD1, P3H3 and P3H4 that catalyzes hydroxylation of lysine residues in collagen alpha chains and is required for normal assembly and cross-linkling of collagen fibrils. Forms hydroxylysine residues in -Xaa-Lys-Gly- sequences in collagens. These hydroxylysines serve as sites of attachment for carbohydrate units and are essential for the stability of the intermolecular collagen cross-links. This is Procollagen-lysine,2-oxoglutarate 5-dioxygenase 1 (PLOD1) from Homo sapiens (Human).